The primary structure comprises 90 residues: Small ribosomal subunit protein uS17 (90 aa).

It belongs to the universal ribosomal protein uS17 family. In terms of assembly, part of the 30S ribosomal subunit.

In terms of biological role, one of the primary rRNA binding proteins, it binds specifically to the 5'-end of 16S ribosomal RNA. In Acidiphilium cryptum (strain JF-5), this protein is Small ribosomal subunit protein uS17.